Reading from the N-terminus, the 288-residue chain is Probable prolyl 4-hydroxylase 9 (288 aa).

Topologically, residues 1–12 (MKSRLKSYRRKK) are cytoplasmic. The helical; Signal-anchor for type II membrane protein transmembrane segment at 13–33 (LGLATVIVFCSLCFLFGFYGS) threads the bilayer. Topologically, residues 34–288 (TLLSQNVPRV…KWIRDQDQEE (255 aa)) are lumenal. Residues 164 to 283 (HGESFNILRY…KWVATKWIRD (120 aa)) form the Fe2OG dioxygenase domain. Residues His-182 and Asp-184 each contribute to the Fe cation site. N-linked (GlcNAc...) asparagine glycosylation is found at Asn-221 and Asn-255. His-264 contributes to the Fe cation binding site. 2-oxoglutarate is bound at residue Lys-274.

Belongs to the P4HA family. Fe(2+) serves as cofactor. Requires L-ascorbate as cofactor.

The protein resides in the endoplasmic reticulum membrane. It localises to the golgi apparatus. It carries out the reaction L-prolyl-[collagen] + 2-oxoglutarate + O2 = trans-4-hydroxy-L-prolyl-[collagen] + succinate + CO2. In terms of biological role, catalyzes the post-translational formation of 4-hydroxyproline in -Xaa-Pro-Gly- sequences in proline-rich peptide sequences of plant glycoproteins and other proteins. Hydroxyprolines are important constituent of many plant cell wall glycoproteins such as extensins, hydroxyproline-rich glycoproteins, lectins and arabinogalactan proteins. This is Probable prolyl 4-hydroxylase 9 from Arabidopsis thaliana (Mouse-ear cress).